A 175-amino-acid polypeptide reads, in one-letter code: Electron transport protein HydN (175 aa).

4Fe-4S ferredoxin-type domains lie at 2-32, 48-79, 80-109, and 124-157; these read NRFIIADASKCIGCRTCEVACVVSHQENQDC, KGVNISTATVCRQCEDAPCANVCPNGAISRDK, GFVHVMQERCIGCKTCVVACPYGAMEVVVR, and DKAEANKCDLCNHREDGPACMAACPTHALICVDR. [4Fe-4S] cluster is bound by residues Cys12, Cys15, Cys18, Cys22, Cys58, Cys61, Cys66, Cys70, Cys89, Cys92, Cys95, Cys99, Cys131, Cys134, Cys143, and Cys147.

The cofactor is [4Fe-4S] cluster.

In terms of biological role, electron transport from formate to hydrogen. The protein is Electron transport protein HydN (hydN) of Escherichia coli O157:H7.